Consider the following 587-residue polypeptide: MSWARSRLCSTLSLAAVSARGATTEGAARRGMSAWPAPQEPGMEYQDAVRTLNTLQTNASYLEQVKRQRSDPQAQLEAMEMYLARSGLQVEDLNRLNIIHVTGTKGKGSTCAFTERILRNYGLKTGFFSSPHMVQVRERIRINGKPISPELFTKHFWCLYNQLEEFKDDSHVSMPSYFRFLTLMAFHVFLQEKVDLAVVEVGIGGAFDCTNIIRKPVVCGVSSLGIDHTSLLGDTVEKIAWQKGGIFKPGVPAFTVVQPEGPLAVLRDRAQQIGCPLYLCPPLEALEEVGLPLSLGLEGAHQRSNAALALQLAHCWLERQDHQDIQELKVSRPSIRWQLPLAPVFRPTPHMRRGLRDTVWPGRTQILQRGPLTWYLDGAHTTSSVQACVHWYRQSLERSKRTDGGSEVHILLFNSTGDRDSAALLKLLQPCQFDYAVFCPNVTEVSSIGNADQQNFTVTLDQVLLRCLQHQQHWNGLAEKQASSNLWSSCGPDPAGPGSLLLAPHPPQPTRTSSLVFSCISHALLWISQGRDPIFQPQSLPRNLLNHPTANSGASILREAAAIHVLVTGSLHLVGGVLKLLDPSMSQ.

Residues 1 to 42 (MSWARSRLCSTLSLAAVSARGATTEGAARRGMSAWPAPQEPG) constitute a mitochondrion transit peptide. 106–109 (GKGS) serves as a coordination point for ATP. Residues Ser-130, Glu-200, and His-228 each contribute to the Mg(2+) site. ATP is bound by residues Arg-363 and Asp-377. At Ser-539 the chain carries Phosphoserine.

This sequence belongs to the folylpolyglutamate synthase family. Monomer. A monovalent cation is required as a cofactor. With non-specific probe, highest content in kidney and liver and lowest in spleen, lung and small intestine, and readily detectable in all of the tumors except hepatoma. Isoform 1 and isoform 2 expressed in leukemic cells and isoform 4 and isoform 5 in liver cells. Isoform 1 and isoform 2 exclusively expressed in hepatoma and Lewis lung carcinoma. Isoform 1 and isoform 2 also expressed in bone marrow, small intestine and spleen. Kidney expresses isoform 1, isoform 2, isoform 4 and isoform 5.

The protein localises to the mitochondrion inner membrane. The protein resides in the mitochondrion matrix. It is found in the cytoplasm. The enzyme catalyses (6S)-5,6,7,8-tetrahydrofolyl-(gamma-L-Glu)(n) + L-glutamate + ATP = (6S)-5,6,7,8-tetrahydrofolyl-(gamma-L-Glu)(n+1) + ADP + phosphate + H(+). The protein operates within cofactor biosynthesis; tetrahydrofolylpolyglutamate biosynthesis. Its activity is regulated as follows. Inhibited by ammonium sulfate. Inhibited by pentaglutamate derivative of DDATHF, but isoform 2 is inhibited to a greater extent at lower concentrations of the compound that is isoform 5. Isoform 5 is virtually unaffected by H(4)PteGlu(5) and 5,10-CH(2)-H(4)PteGlu(5) at concentrations that substantially inhibits the activity of isoform 2. Isoform 2 and 5 are equally sensitive to polyglutamates of 10-CHO-H(4)-PteGlu. Catalyzes conversion of folates to polyglutamate derivatives allowing concentration of folate compounds in the cell and the intracellular retention of these cofactors, which are important substrates for most of the folate-dependent enzymes that are involved in one-carbon transfer reactions involved in purine, pyrimidine and amino acid synthesis. Dihydrofolate, tetrahydrofolate, 5,10-methylenetetrahydrofolate, 10-formyltetrahydrofolate and 5-formyltetrahydrofolate are the best substrates. Folic acid and 5-methyltetrahydrofolate can also act as substrates. This chain is Folylpolyglutamate synthase, mitochondrial (Fpgs), found in Mus musculus (Mouse).